The sequence spans 196 residues: Putative 3-methyladenine DNA glycosylase (196 aa).

This sequence belongs to the DNA glycosylase MPG family.

This Chlorobium luteolum (strain DSM 273 / BCRC 81028 / 2530) (Pelodictyon luteolum) protein is Putative 3-methyladenine DNA glycosylase.